The chain runs to 667 residues: Sorting nexin mvp1 (667 aa).

Residues alanine 221–arginine 268 form a disordered region. A compositionally biased stretch (polar residues) spans leucine 224–serine 236. The 120-residue stretch at threonine 279 to phenylalanine 398 folds into the PX domain. A 1,2-diacyl-sn-glycero-3-phospho-(1D-myo-inositol-3-phosphate) is bound by residues arginine 320, serine 322, and lysine 346. The tract at residues alanine 574–alanine 594 is disordered.

The protein belongs to the sorting nexin family. In terms of assembly, homodimer. Forms an autoinhibited tetramer consisting of 2 homodimers that self-interact, wherein the membrane-interacting BAR surfaces are sequestered and the PX lipid-binding sites are occluded. Interacts with Vps1.

The protein resides in the cytoplasm. Its subcellular location is the endosome membrane. Its function is as follows. Required for vacuolar protein sorting. Component of the retromer-mediated endosome-to-Golgi retrograde pathway. Required for efficient cargo export from the endosome, promoting Vps1-mediated fission of retromer-coated tubules that bud from the endosome. This chain is Sorting nexin mvp1 (mvp1), found in Schizosaccharomyces pombe (strain 972 / ATCC 24843) (Fission yeast).